The chain runs to 286 residues: Shikimate dehydrogenase (NADP(+)) (286 aa).

Residues 22–24 and threonine 71 contribute to the shikimate site; that span reads SRS. The active-site Proton acceptor is lysine 75. Glutamate 87 contributes to the NADP(+) binding site. The shikimate site is built by asparagine 96 and aspartate 111. Residues 136–140, 160–165, and isoleucine 225 contribute to the NADP(+) site; these read GAGGA and NRTVER. Tyrosine 227 is a binding site for shikimate. Glycine 248 is a binding site for NADP(+).

This sequence belongs to the shikimate dehydrogenase family. As to quaternary structure, homodimer.

It carries out the reaction shikimate + NADP(+) = 3-dehydroshikimate + NADPH + H(+). It functions in the pathway metabolic intermediate biosynthesis; chorismate biosynthesis; chorismate from D-erythrose 4-phosphate and phosphoenolpyruvate: step 4/7. Functionally, involved in the biosynthesis of the chorismate, which leads to the biosynthesis of aromatic amino acids. Catalyzes the reversible NADPH linked reduction of 3-dehydroshikimate (DHSA) to yield shikimate (SA). This Rhizobium rhizogenes (strain K84 / ATCC BAA-868) (Agrobacterium radiobacter) protein is Shikimate dehydrogenase (NADP(+)).